The following is a 432-amino-acid chain: Putative transposase A625R (432 aa).

Positions 375, 378, 393, and 395 each coordinate Zn(2+).

In the N-terminal section; belongs to the transposase 2 family. This sequence in the C-terminal section; belongs to the transposase 35 family.

The protein is Putative transposase A625R of Chlorella (PBCV-1).